The sequence spans 529 residues: Peptide chain release factor 3 (529 aa).

Residues 11-280 (AKRRTFAIIS…GLVAWAPAPM (270 aa)) enclose the tr-type G domain. Residues 20-27 (SHPDAGKT), 88-92 (DTPGH), and 142-145 (NKLD) contribute to the GTP site.

This sequence belongs to the TRAFAC class translation factor GTPase superfamily. Classic translation factor GTPase family. PrfC subfamily.

The protein localises to the cytoplasm. Functionally, increases the formation of ribosomal termination complexes and stimulates activities of RF-1 and RF-2. It binds guanine nucleotides and has strong preference for UGA stop codons. It may interact directly with the ribosome. The stimulation of RF-1 and RF-2 is significantly reduced by GTP and GDP, but not by GMP. The sequence is that of Peptide chain release factor 3 (prfC) from Salmonella typhi.